A 516-amino-acid polypeptide reads, in one-letter code: Maturase K (516 aa).

Belongs to the intron maturase 2 family. MatK subfamily.

The protein resides in the plastid. It is found in the chloroplast. Usually encoded in the trnK tRNA gene intron. Probably assists in splicing its own and other chloroplast group II introns. The sequence is that of Maturase K from Colchicum speciosum (Giant meadow saffron).